A 655-amino-acid chain; its full sequence is p-hydroxybenzoic acid efflux pump subunit AaeB (655 aa).

The next 11 helical transmembrane spans lie at 13–33 (FAVK…HFQL), 38–58 (WAVL…GGEP), 69–89 (LRII…IAMI), 93–113 (LLMI…SSLV), 121–141 (WGLA…EPLL), 152–172 (EIVI…PRSI), 370–390 (LFWL…IAVV), 407–427 (FIYG…VIIP), 431–451 (QSML…GIEV), 459–479 (MGAL…TFHF), and 482–502 (FLDS…VILL).

It belongs to the aromatic acid exporter ArAE (TC 2.A.85) family.

The protein localises to the cell inner membrane. Forms an efflux pump with AaeA. Could function as a metabolic relief valve, allowing to eliminate certain compounds when they accumulate to high levels in the cell. This is p-hydroxybenzoic acid efflux pump subunit AaeB from Escherichia coli O6:K15:H31 (strain 536 / UPEC).